Reading from the N-terminus, the 413-residue chain is Hibernation-specific plasma protein HP-55 (413 aa).

The first 24 residues, 1 to 24, serve as a signal peptide directing secretion; that stretch reads MPSSISWGLLLLAALSCLGPGSLA. Pyrrolidone carboxylic acid is present on Q25. N-linked (GlcNAc...) asparagine glycosylation is found at N65, N102, N165, and N266. Positions 368 to 387 are RCL; sequence GGTVLGAEAMLQAPIMKFDR.

The protein belongs to the serpin family. In terms of assembly, plasma proteins HP-20, HP-25, HP-27 and HP-55 form a 140 kDa complex via disulfide bonds in the plasma. Post-translationally, the N-terminus is blocked. Plasma; synthesized in the liver.

The protein resides in the secreted. Functionally, protease inhibitor. This is Hibernation-specific plasma protein HP-55 from Tamias sibiricus (Siberian chipmunk).